The chain runs to 695 residues: NADPH--cytochrome P450 reductase (695 aa).

The Lumenal portion of the chain corresponds to 1-8 (MAQLDTLD). Residues 9-31 (VVVLAVLLAGSIAYFTKGTFWAV) traverse the membrane as a helical segment. Residues 32–695 (AKDPYASSGP…SGSYQEDVWS (664 aa)) lie on the Cytoplasmic side of the membrane. The Flavodoxin-like domain maps to 66–221 (CVIFYGSQTG…DFLAWKEPMW (156 aa)). Residues 72-77 (SQTGTA), 123-126 (ATYG), 169-178 (LGNNTYEHYN), and aspartate 204 each bind FMN. Residues 277–538 (HNPYIAPIVE…HVRHSNFKLP (262 aa)) enclose the FAD-binding FR-type domain. Arginine 296 contacts NADP(+). Residues 451 to 454 (RYYS), 469 to 471 (TAV), and 486 to 489 (GVTT) each bind FAD. The tract at residues 497-516 (QKQNGDPSPDPHGQTYAING) is disordered. NADP(+) contacts are provided by residues threonine 552, 614–615 (SR), 620–624 (KVYVQ), and glutamate 656. Residue tryptophan 694 participates in FAD binding.

Belongs to the NADPH--cytochrome P450 reductase family. The protein in the N-terminal section; belongs to the flavodoxin family. This sequence in the C-terminal section; belongs to the flavoprotein pyridine nucleotide cytochrome reductase family. FAD serves as cofactor. FMN is required as a cofactor.

Its subcellular location is the endoplasmic reticulum membrane. The protein localises to the mitochondrion outer membrane. It is found in the cell membrane. The catalysed reaction is 2 oxidized [cytochrome P450] + NADPH = 2 reduced [cytochrome P450] + NADP(+) + H(+). Its function is as follows. This enzyme is required for electron transfer from NADP to cytochrome P450 in microsomes. It can also provide electron transfer to heme oxygenase and cytochrome B5. Involved in ergosterol biosynthesis. This is NADPH--cytochrome P450 reductase from Emericella nidulans (strain FGSC A4 / ATCC 38163 / CBS 112.46 / NRRL 194 / M139) (Aspergillus nidulans).